Reading from the N-terminus, the 496-residue chain is MAFEKTRQFLPPLHFVLFPFMAQGHMIPMVDIARILAQRGVTITIVTTPHNAARFKDVLNRAIQSGLHIRVEHVKFPFQEAGLQEGQENVDFLDSMELMVHFFKAVNMLENPVMKLMEEMKPKPSCLISDFCLPYTSKIAKRFNIPKIVFHGVSCFCLLSMHILHRNHNILHALKSDKEYFLVPSFPDRVEFTKLQVTVKTNFSGDWKEIMDEQVDADDTSYGVIVNTFQDLESAYVKNYTEARAGKVWSIGPVSLCNKVGEDKAERGNKAAIDQDECIKWLDSKDVESVLYVCLGSICNLPLAQLRELGLGLEATKRPFIWVIRGGGKYHELAEWILESGFEERTKERSLLIKGWSPQMLILSHPAVGGFLTHCGWNSTLEGITSGVPLITWPLFGDQFCNQKLIVQVLKAGVSVGVEEVMKWGEEESIGVLVDKEGVKKAVDEIMGESDEAKERRKRVRELGELAHKAVEEGGSSHSNIIFLLQDIMQQVESKS.

UDP-alpha-D-glucose-binding positions include serine 297, 357 to 359, 374 to 382, and 396 to 399; these read SPQ, HCGWNSTLE, and FGDQ.

The protein belongs to the UDP-glycosyltransferase family.

The protein is UDP-glycosyltransferase 73C2 (UGT73C2) of Arabidopsis thaliana (Mouse-ear cress).